The chain runs to 59 residues: Large ribosomal subunit protein uL30 (59 aa).

Belongs to the universal ribosomal protein uL30 family. As to quaternary structure, part of the 50S ribosomal subunit.

The chain is Large ribosomal subunit protein uL30 from Aeromonas hydrophila subsp. hydrophila (strain ATCC 7966 / DSM 30187 / BCRC 13018 / CCUG 14551 / JCM 1027 / KCTC 2358 / NCIMB 9240 / NCTC 8049).